A 268-amino-acid chain; its full sequence is Trypsin-like protease (268 aa).

The first 41 residues, 1–41 (MTHTTTIAAKRGGLALAKKAAAAGAVALAVASLQPVSAAHA), serve as a signal peptide directing secretion. Positions 42-45 (ADAR) are cleaved as a propeptide — activation peptide. The Peptidase S1 domain occupies 46–266 (VIGGKPAAQN…FAKDIAKAAS (221 aa)). An intrachain disulfide couples Cys67 to Cys83. Active-site charge relay system residues include His82 and Asp127. Cystine bridges form between Cys187–Cys202 and Cys213–Cys242. Ser217 acts as the Charge relay system in catalysis.

It belongs to the peptidase S1 family.

Functionally, protease that shows preferential cleavage after Arg and Lys residues. This is Trypsin-like protease from Streptomyces glaucescens.